Here is a 253-residue protein sequence, read N- to C-terminus: Sporulated oocyst TA4 antigen (253 aa).

The signal sequence occupies residues 1–23 (MARLSFVSLLSLSLLFGQQAVRA). Positions 182 to 184 (RRL) are cleaved as a propeptide — removed in mature form.

In terms of assembly, the TA4 antigen is composed of a 17 kDa and a 8 kDa chain, linked by a disulfide bond.

The chain is Sporulated oocyst TA4 antigen from Eimeria tenella (Coccidian parasite).